The primary structure comprises 614 residues: UvrABC system protein C (614 aa).

Residues 25-103 (SVPGVYKMFG…IKSLKPKYNI (79 aa)) enclose the GIY-YIG domain. One can recognise a UVR domain in the interval 214-249 (KEIQCELFEMMCRFSNNQDYESAIVCRDRLHALKSM).

It belongs to the UvrC family. As to quaternary structure, interacts with UvrB in an incision complex.

It is found in the cytoplasm. The UvrABC repair system catalyzes the recognition and processing of DNA lesions. UvrC both incises the 5' and 3' sides of the lesion. The N-terminal half is responsible for the 3' incision and the C-terminal half is responsible for the 5' incision. This chain is UvrABC system protein C, found in Anaplasma phagocytophilum (strain HZ).